The chain runs to 608 residues: Phosphomethylpyrimidine synthase (608 aa).

Substrate-binding positions include Asn216, Met245, Tyr274, His310, 330-332 (SRG), 371-374 (DGLR), and Glu410. His414 is a binding site for Zn(2+). Tyr437 serves as a coordination point for substrate. A Zn(2+)-binding site is contributed by His478. [4Fe-4S] cluster-binding residues include Cys558, Cys561, and Cys566.

It belongs to the ThiC family. As to quaternary structure, homodimer. [4Fe-4S] cluster serves as cofactor.

The catalysed reaction is 5-amino-1-(5-phospho-beta-D-ribosyl)imidazole + S-adenosyl-L-methionine = 4-amino-2-methyl-5-(phosphooxymethyl)pyrimidine + CO + 5'-deoxyadenosine + formate + L-methionine + 3 H(+). It functions in the pathway cofactor biosynthesis; thiamine diphosphate biosynthesis. Functionally, catalyzes the synthesis of the hydroxymethylpyrimidine phosphate (HMP-P) moiety of thiamine from aminoimidazole ribotide (AIR) in a radical S-adenosyl-L-methionine (SAM)-dependent reaction. In Ruegeria sp. (strain TM1040) (Silicibacter sp.), this protein is Phosphomethylpyrimidine synthase.